The primary structure comprises 217 residues: GrpE protein homolog 1, mitochondrial (217 aa).

The N-terminal 27 residues, 1–27 (MAAQCVRLARRSLPALALSLRPSPRLL), are a transit peptide targeting the mitochondrion. The interval 29–56 (TATKQKNSGQNLEEDMGQSEQKADPPAT) is disordered. Residues 30–39 (ATKQKNSGQN) show a composition bias toward polar residues. Position 94 is an N6-acetyllysine; alternate (Lys94). Lys94 bears the N6-succinyllysine; alternate mark. Position 100 is an N6-acetyllysine (Lys100). Lys120 is subject to N6-succinyllysine. Lys215 carries the post-translational modification N6-acetyllysine; alternate. Lys215 is modified (N6-succinyllysine; alternate).

The protein belongs to the GrpE family. Probable component of the PAM complex at least composed of a mitochondrial HSP70 protein, GRPEL1 or GRPEL2, TIMM44, TIMM16/PAM16 and TIMM14/DNAJC19. Binds to HSP70, HSC70 and HSJ1B.

Its subcellular location is the mitochondrion matrix. In terms of biological role, essential component of the PAM complex, a complex required for the translocation of transit peptide-containing proteins from the inner membrane into the mitochondrial matrix in an ATP-dependent manner. Seems to control the nucleotide-dependent binding of mitochondrial HSP70 to substrate proteins. This chain is GrpE protein homolog 1, mitochondrial (GRPEL1), found in Homo sapiens (Human).